The following is a 515-amino-acid chain: Maturase K (515 aa).

Belongs to the intron maturase 2 family. MatK subfamily.

Its subcellular location is the plastid. The protein localises to the chloroplast. In terms of biological role, usually encoded in the trnK tRNA gene intron. Probably assists in splicing its own and other chloroplast group II introns. This Pinus pinea (Italian stone pine) protein is Maturase K.